Here is a 149-residue protein sequence, read N- to C-terminus: Calmodulin (149 aa).

Residue alanine 2 is modified to N-acetylalanine. EF-hand domains are found at residues 8–43, 44–79, 81–116, and 117–149; these read EQIA…LGQN, PTEA…KMKD, DTEE…LGEK, and LTDE…MMAK. Ca(2+)-binding residues include aspartate 21, aspartate 23, aspartate 25, threonine 27, glutamate 32, aspartate 57, aspartate 59, asparagine 61, threonine 63, glutamate 68, aspartate 94, aspartate 96, asparagine 98, and glutamate 105. Position 116 is an N6,N6,N6-trimethyllysine (lysine 116). Residues aspartate 130, aspartate 132, aspartate 134, glutamine 136, and glutamate 141 each contribute to the Ca(2+) site.

Belongs to the calmodulin family.

In terms of biological role, calmodulin mediates the control of a large number of enzymes, ion channels and other proteins by Ca(2+). Among the enzymes to be stimulated by the calmodulin-Ca(2+) complex are a number of protein kinases and phosphatases. The polypeptide is Calmodulin (Karlodinium veneficum (Dinoflagellate)).